The sequence spans 309 residues: HTH-type transcriptional activator AaeR (309 aa).

In terms of domain architecture, HTH lysR-type spans 1 to 59 (MERLKRMSVFAKVVEFGSFTAAARQLQMSVSSISQTVSKLEDELQVKLLNRSTRSIGLT). The H-T-H motif DNA-binding region spans 19 to 38 (FTAAARQLQMSVSSISQTVS).

Belongs to the LysR transcriptional regulatory family.

Activity is regulated by p-hydroxybenzoic acid. Its function is as follows. Transcriptional regulator that activates expression of the aaeXAB operon, which is involved in the efflux of aromatic carboxylic acids such as p-hydroxybenzoic acid (pHBA). In the presence of the effector pHBA, acts by binding to a single target within the aaeXAB-aaeR intergenic region. In the absence of pHBA, binds more than 50 sites along the E.coli K12 genome, including genes related to biofilm formation and several genes involved in stress response, suggesting that it might play a role in quorum sensing in the absence of pHBA. In Escherichia coli (strain K12), this protein is HTH-type transcriptional activator AaeR.